Consider the following 311-residue polypeptide: Tricarboxylate transport protein, mitochondrial (311 aa).

Residues 1–13 constitute a propeptide, removed in mature form; the sequence is MAAPRAPRALTAA. 3 Solcar repeats span residues 23–111, 122–208, and 218–303; these read THPG…LSNH, RRGL…LRNW, and MNPL…VVKL. 3 helical membrane passes run 29–46, 86–105, and 129–143; these read ILAG…TFPT, GLSS…FGMF, and LGAG…VCPM. Phosphoserine is present on Ser156. Transmembrane regions (helical) follow at residues 183–202, 224–241, and 278–297; these read GLTA…FFVM, GVFG…NTPL, and GTVP…FVIY.

Belongs to the mitochondrial carrier (TC 2.A.29) family. Post-translationally, possesses a short cleavable presequence, which, however, is found to be dispensable both for targeting to mitochondria and insertion into the inner membrane. However, the presequence is required to keep SLC25A1 in a soluble state and thus in an import-competent state. Mature SLC25A1 lacking the presequence is prone to aggregation.

Its subcellular location is the mitochondrion inner membrane. It carries out the reaction (S)-malate(in) + citrate(out) = (S)-malate(out) + citrate(in). The enzyme catalyses citrate(out) + succinate(in) = citrate(in) + succinate(out). It catalyses the reaction D-threo-isocitrate(in) + citrate(out) = D-threo-isocitrate(out) + citrate(in). The catalysed reaction is cis-aconitate(in) + citrate(out) = cis-aconitate(out) + citrate(in). It carries out the reaction trans-aconitate(in) + citrate(out) = trans-aconitate(out) + citrate(in). The enzyme catalyses phosphoenolpyruvate(in) + citrate(out) = phosphoenolpyruvate(out) + citrate(in). It catalyses the reaction maleate(in) + citrate(out) = maleate(out) + citrate(in). Mitochondrial electroneutral antiporter that exports citrate from the mitochondria into the cytosol in exchange for malate. Also able to mediate the exchange of citrate for isocitrate, phosphoenolpyruvate, cis-aconitate and to a lesser extent trans-aconitate, maleate and succinate. In the cytoplasm, citrate plays important roles in fatty acid and sterol synthesis, regulation of glycolysis, protein acetylation, and other physiopathological processes. The polypeptide is Tricarboxylate transport protein, mitochondrial (Slc25a1) (Rattus norvegicus (Rat)).